Here is a 290-residue protein sequence, read N- to C-terminus: Arylamine N-acetyltransferase 1 (290 aa).

Met-1 bears the N-acetylmethionine mark. Cys-68 acts as the Acyl-thioester intermediate in catalysis. Ser-103 serves as a coordination point for CoA. 106–107 serves as a coordination point for substrate; that stretch reads VH. Residues His-107 and Asp-122 contribute to the active site. Tyr-208 serves as a coordination point for CoA.

It belongs to the arylamine N-acetyltransferase family.

The protein resides in the cytoplasm. The enzyme catalyses an arylamine + acetyl-CoA = an N-acetylarylamine + CoA. Functionally, participates in the detoxification of a plethora of hydrazine and arylamine drugs. Isoniazid, 2-aminofluorene and anisidine are preferred substrates for NAT-1. No activity with p-aminobenzoic acid (PABA) nor SMZ. The polypeptide is Arylamine N-acetyltransferase 1 (Nat1) (Mus musculus (Mouse)).